We begin with the raw amino-acid sequence, 267 residues long: MVRAAVAGIAGRMGSRIAQLIRETDGIELAGGFEHSGHQAVNREISEIIGGSPTGLKVTSHIAQVLDTVDVVLDFTLAAASLEHLRQASARGKAMVIGSTGFAREQLEEAEKLAGRVPCVISPNMSMGVNVLFKVVGDVARLLGESFDVEIIEAHHRLKKDAPSGTALKLAQVAAGALGRNLEEVGVYARRGLIGERTGNEIGIQTIRGGDIVGEHTVMFAGSGERIEIVHRAQSRDNFARGAIRAALWVVRQPPGLYGMDHVLGMK.

Residues 8-13 (GIAGRM), Glu-34, 98-100 (GST), and 122-125 (SPNM) each bind NAD(+). Catalysis depends on His-155, which acts as the Proton donor/acceptor. Residue His-156 participates in (S)-2,3,4,5-tetrahydrodipicolinate binding. The Proton donor role is filled by Lys-159. Position 165–166 (165–166 (GT)) interacts with (S)-2,3,4,5-tetrahydrodipicolinate.

It belongs to the DapB family.

The protein localises to the cytoplasm. The enzyme catalyses (S)-2,3,4,5-tetrahydrodipicolinate + NAD(+) + H2O = (2S,4S)-4-hydroxy-2,3,4,5-tetrahydrodipicolinate + NADH + H(+). It carries out the reaction (S)-2,3,4,5-tetrahydrodipicolinate + NADP(+) + H2O = (2S,4S)-4-hydroxy-2,3,4,5-tetrahydrodipicolinate + NADPH + H(+). It functions in the pathway amino-acid biosynthesis; L-lysine biosynthesis via DAP pathway; (S)-tetrahydrodipicolinate from L-aspartate: step 4/4. In terms of biological role, catalyzes the conversion of 4-hydroxy-tetrahydrodipicolinate (HTPA) to tetrahydrodipicolinate. The sequence is that of 4-hydroxy-tetrahydrodipicolinate reductase from Syntrophobacter fumaroxidans (strain DSM 10017 / MPOB).